The sequence spans 158 residues: FUN14 domain-containing protein 1 (158 aa).

A YXXL motif is present at residues 21–24 (YEVV). A run of 2 helical transmembrane segments spans residues 51-70 (YSVT…AGYL) and 77-98 (IAAT…SGYV).

It belongs to the FUN14 family.

The protein localises to the mitochondrion outer membrane. Acts as an activator of hypoxia-induced mitophagy, an important mechanism for mitochondrial quality control. This Tetraodon nigroviridis (Spotted green pufferfish) protein is FUN14 domain-containing protein 1 (fundc1).